We begin with the raw amino-acid sequence, 137 residues long: Large ribosomal subunit protein uL16 (137 aa).

This sequence belongs to the universal ribosomal protein uL16 family. As to quaternary structure, part of the 50S ribosomal subunit.

In terms of biological role, binds 23S rRNA and is also seen to make contacts with the A and possibly P site tRNAs. The chain is Large ribosomal subunit protein uL16 from Dinoroseobacter shibae (strain DSM 16493 / NCIMB 14021 / DFL 12).